A 479-amino-acid chain; its full sequence is Bifunctional protein HldE (479 aa).

The ribokinase stretch occupies residues 1-322 (MLAETQLAPI…AALERTAAQI (322 aa)). Residue 198-201 (NRRE) participates in ATP binding. Asp267 is an active-site residue. The segment at 350-479 (FTNGCFDLVH…TSSLVAKART (130 aa)) is cytidylyltransferase.

It in the N-terminal section; belongs to the carbohydrate kinase PfkB family. In the C-terminal section; belongs to the cytidylyltransferase family. Homodimer.

It carries out the reaction D-glycero-beta-D-manno-heptose 7-phosphate + ATP = D-glycero-beta-D-manno-heptose 1,7-bisphosphate + ADP + H(+). The catalysed reaction is D-glycero-beta-D-manno-heptose 1-phosphate + ATP + H(+) = ADP-D-glycero-beta-D-manno-heptose + diphosphate. The protein operates within nucleotide-sugar biosynthesis; ADP-L-glycero-beta-D-manno-heptose biosynthesis; ADP-L-glycero-beta-D-manno-heptose from D-glycero-beta-D-manno-heptose 7-phosphate: step 1/4. It participates in nucleotide-sugar biosynthesis; ADP-L-glycero-beta-D-manno-heptose biosynthesis; ADP-L-glycero-beta-D-manno-heptose from D-glycero-beta-D-manno-heptose 7-phosphate: step 3/4. In terms of biological role, catalyzes the phosphorylation of D-glycero-D-manno-heptose 7-phosphate at the C-1 position to selectively form D-glycero-beta-D-manno-heptose-1,7-bisphosphate. Its function is as follows. Catalyzes the ADP transfer from ATP to D-glycero-beta-D-manno-heptose 1-phosphate, yielding ADP-D-glycero-beta-D-manno-heptose. The protein is Bifunctional protein HldE of Azorhizobium caulinodans (strain ATCC 43989 / DSM 5975 / JCM 20966 / LMG 6465 / NBRC 14845 / NCIMB 13405 / ORS 571).